The sequence spans 157 residues: uncharacterized protein (157 aa).

Residues 42 to 64 (SCIRLIVMFICVAMITCPNSLRF) form a helical membrane-spanning segment.

It is found in the membrane. This is an uncharacterized protein from Saccharomyces cerevisiae (strain ATCC 204508 / S288c) (Baker's yeast).